The primary structure comprises 370 residues: 4-hydroxy-3-methylbut-2-en-1-yl diphosphate synthase (flavodoxin) (370 aa).

Residues Cys-265, Cys-268, Cys-300, and Glu-307 each coordinate [4Fe-4S] cluster.

Belongs to the IspG family. [4Fe-4S] cluster is required as a cofactor.

It carries out the reaction (2E)-4-hydroxy-3-methylbut-2-enyl diphosphate + oxidized [flavodoxin] + H2O + 2 H(+) = 2-C-methyl-D-erythritol 2,4-cyclic diphosphate + reduced [flavodoxin]. It participates in isoprenoid biosynthesis; isopentenyl diphosphate biosynthesis via DXP pathway; isopentenyl diphosphate from 1-deoxy-D-xylulose 5-phosphate: step 5/6. In terms of biological role, converts 2C-methyl-D-erythritol 2,4-cyclodiphosphate (ME-2,4cPP) into 1-hydroxy-2-methyl-2-(E)-butenyl 4-diphosphate. This is 4-hydroxy-3-methylbut-2-en-1-yl diphosphate synthase (flavodoxin) from Symbiobacterium thermophilum (strain DSM 24528 / JCM 14929 / IAM 14863 / T).